The chain runs to 219 residues: uncharacterized protein (219 aa).

This is an uncharacterized protein from Escherichia coli (strain K12).